Reading from the N-terminus, the 189-residue chain is dCTP deaminase (189 aa).

DCTP contacts are provided by residues 112–117, 136–138, Gln-157, Tyr-171, and Gln-181; these read KSTYAR and TLE. The Proton donor/acceptor role is filled by Glu-138.

The protein belongs to the dCTP deaminase family. As to quaternary structure, homotrimer.

The catalysed reaction is dCTP + H2O + H(+) = dUTP + NH4(+). It functions in the pathway pyrimidine metabolism; dUMP biosynthesis; dUMP from dCTP (dUTP route): step 1/2. Catalyzes the deamination of dCTP to dUTP. In Halorhodospira halophila (strain DSM 244 / SL1) (Ectothiorhodospira halophila (strain DSM 244 / SL1)), this protein is dCTP deaminase.